The chain runs to 144 residues: MSAITRIIDKIGIVGTIVGSFSCAMCFPAAASLGAAIGLGFLSQWEGLFVQWLIPIFASVALLATLAGWFSHRQWQRTLLGSIGPVLALVGVFGLTHHFLDKDLARVIFYTGLVVMFLVSIWDMVNPANRRCATDGCETPAPRS.

At Met1 to Phe21 the chain is on the cytoplasmic side. The chain crosses the membrane as a helical span at residues Ser22–Leu42. Residues Cys23 and Cys26 each coordinate Hg(2+). Residues Ser43–Glu46 are Periplasmic-facing. The helical transmembrane segment at Gly47–Ala67 threads the bilayer. Topologically, residues Gly68–Thr78 are cytoplasmic. Residues Leu79–Phe99 traverse the membrane as a helical segment. Over Leu100–Asp103 the chain is Periplasmic. The helical transmembrane segment at Leu104–Met124 threads the bilayer. At Val125–Ser144 the chain is on the cytoplasmic side.

In terms of assembly, monomer.

It is found in the cell inner membrane. Inhibited by the thiol-modifying reagent N-ethylmaleimide (NEM). Functionally, involved in mercuric ion uptake. The sequence is that of Mercuric transport protein MerC from Acidithiobacillus ferrooxidans (Thiobacillus ferrooxidans).